Here is a 360-residue protein sequence, read N- to C-terminus: Malate dehydrogenase (360 aa).

The protein belongs to the LDH2/MDH2 oxidoreductase family. In terms of assembly, homodimer.

It is found in the cytoplasm. The catalysed reaction is (S)-malate + NAD(+) = oxaloacetate + NADH + H(+). The sequence is that of Malate dehydrogenase (mdh) from Pyrococcus horikoshii (strain ATCC 700860 / DSM 12428 / JCM 9974 / NBRC 100139 / OT-3).